The chain runs to 456 residues: tRNA (guanine(37)-N(1))-methyltransferase (456 aa).

Residues His246, 284 to 285, 310 to 311, and Asn336 each bind S-adenosyl-L-methionine; these read DL and DG.

This sequence belongs to the class I-like SAM-binding methyltransferase superfamily. TRM5/TYW2 family. Monomer.

It is found in the mitochondrion matrix. The protein localises to the nucleus. Its subcellular location is the cytoplasm. It catalyses the reaction guanosine(37) in tRNA + S-adenosyl-L-methionine = N(1)-methylguanosine(37) in tRNA + S-adenosyl-L-homocysteine + H(+). In terms of biological role, specifically methylates the N1 position of guanosine-37 in various cytoplasmic and mitochondrial tRNAs. Methylation is not dependent on the nature of the nucleoside 5' of the target nucleoside. This is the first step in the biosynthesis of wybutosine (yW), a modified base adjacent to the anticodon of tRNAs and required for accurate decoding. The polypeptide is tRNA (guanine(37)-N(1))-methyltransferase (Ciona intestinalis (Transparent sea squirt)).